Consider the following 203-residue polypeptide: Glycerol-3-phosphate acyltransferase (203 aa).

4 helical membrane-spanning segments follow: residues 6–26 (LTLLMIVSAYLAGSISSAVLV), 82–102 (AISLGLIAIAACLGHIYPIFF), 118–138 (APIGDDLAICLMASWVVLLLI), and 141–161 (YSSLAAIITALLAPLYTWWLD).

Belongs to the PlsY family. As to quaternary structure, probably interacts with PlsX.

It is found in the cell inner membrane. It carries out the reaction an acyl phosphate + sn-glycerol 3-phosphate = a 1-acyl-sn-glycero-3-phosphate + phosphate. It participates in lipid metabolism; phospholipid metabolism. In terms of biological role, catalyzes the transfer of an acyl group from acyl-phosphate (acyl-PO(4)) to glycerol-3-phosphate (G3P) to form lysophosphatidic acid (LPA). This enzyme utilizes acyl-phosphate as fatty acyl donor, but not acyl-CoA or acyl-ACP. The chain is Glycerol-3-phosphate acyltransferase from Shewanella putrefaciens (strain CN-32 / ATCC BAA-453).